The sequence spans 253 residues: Small ribosomal subunit protein uS2 (253 aa).

This sequence belongs to the universal ribosomal protein uS2 family.

This is Small ribosomal subunit protein uS2 from Chlorobium luteolum (strain DSM 273 / BCRC 81028 / 2530) (Pelodictyon luteolum).